We begin with the raw amino-acid sequence, 445 residues long: DNA primase DnaG (445 aa).

The Toprim domain maps to 166 to 252; the sequence is DAIVVVEGRS…SVEDLSRSEV (87 aa). Residues Glu-172, Asp-214, and Asp-216 each coordinate Mg(2+). The disordered stretch occupies residues 276-355; it reads EEMSQAGEST…NGDGPTIPSL (80 aa). Low complexity predominate over residues 284–298; the sequence is STTADGGAVAAATSD. Polar residues predominate over residues 303-313; the sequence is NQPSPSSQTGS. Positions 324-337 are enriched in low complexity; it reads SVVDNSNATAVADA.

This sequence belongs to the archaeal DnaG primase family. Forms a ternary complex with MCM helicase and DNA. The cofactor is Mg(2+).

It catalyses the reaction ssDNA + n NTP = ssDNA/pppN(pN)n-1 hybrid + (n-1) diphosphate.. RNA polymerase that catalyzes the synthesis of short RNA molecules used as primers for DNA polymerase during DNA replication. The chain is DNA primase DnaG from Haloarcula marismortui (strain ATCC 43049 / DSM 3752 / JCM 8966 / VKM B-1809) (Halobacterium marismortui).